A 152-amino-acid polypeptide reads, in one-letter code: Transcriptional repressor NrdR (152 aa).

A zinc finger lies at 3 to 34 (CPFCHNEQSRVIDSRVIDSGTSIRRRRECAAC). Residues 46–136 (LSVVKRNGLA…VYKSFESADD (91 aa)) form the ATP-cone domain.

It belongs to the NrdR family. Requires Zn(2+) as cofactor.

In terms of biological role, negatively regulates transcription of bacterial ribonucleotide reductase nrd genes and operons by binding to NrdR-boxes. This Corynebacterium aurimucosum (strain ATCC 700975 / DSM 44827 / CIP 107346 / CN-1) (Corynebacterium nigricans) protein is Transcriptional repressor NrdR.